The primary structure comprises 495 residues: L-arabinose isomerase (495 aa).

The Mn(2+) site is built by Glu305, Glu332, His349, and His448.

The protein belongs to the arabinose isomerase family. Mn(2+) serves as cofactor.

It catalyses the reaction beta-L-arabinopyranose = L-ribulose. It functions in the pathway carbohydrate degradation; L-arabinose degradation via L-ribulose; D-xylulose 5-phosphate from L-arabinose (bacterial route): step 1/3. Functionally, catalyzes the conversion of L-arabinose to L-ribulose. The sequence is that of L-arabinose isomerase from Actinobacillus succinogenes (strain ATCC 55618 / DSM 22257 / CCUG 43843 / 130Z).